Reading from the N-terminus, the 434-residue chain is Glutamyl-tRNA reductase (434 aa).

Residues 52-55 (TCNR), Ser-115, 120-122 (ETQ), and Gln-126 each bind substrate. Residue Cys-53 is the Nucleophile of the active site. 195–200 (GAGEMI) contacts NADP(+).

Belongs to the glutamyl-tRNA reductase family. In terms of assembly, homodimer.

The catalysed reaction is (S)-4-amino-5-oxopentanoate + tRNA(Glu) + NADP(+) = L-glutamyl-tRNA(Glu) + NADPH + H(+). Its pathway is porphyrin-containing compound metabolism; protoporphyrin-IX biosynthesis; 5-aminolevulinate from L-glutamyl-tRNA(Glu): step 1/2. In terms of biological role, catalyzes the NADPH-dependent reduction of glutamyl-tRNA(Glu) to glutamate 1-semialdehyde (GSA). This is Glutamyl-tRNA reductase from Cupriavidus metallidurans (strain ATCC 43123 / DSM 2839 / NBRC 102507 / CH34) (Ralstonia metallidurans).